Here is a 512-residue protein sequence, read N- to C-terminus: Capsid scaffolding protein (512 aa).

Active-site charge relay system residues include His-47, Ser-115, and His-131. The interaction with pAP stretch occupies residues 264–282; the sequence is DLISTICSTTHTTHHDLVR. The tract at residues 376-407 is disordered; the sequence is RGSQKRCAPTDSDDEMSFPGDPDYTTKKKKRY. Residues 402-408 carry the Nuclear localization signal motif; sequence KKKKRYR. The segment at 492–512 is interaction with major capsid protein; that stretch reads DQSLLSLNKKLFVEALNKMDN.

The protein belongs to the herpesviridae capsid scaffolding protein family. In terms of assembly, homomultimer. Interacts with major capsid protein. Exists in a monomer-dimer equilibrium with the dimer being the active species. Post-translationally, capsid scaffolding protein is cleaved by assemblin after formation of the spherical procapsid. As a result, the capsid obtains its mature, icosahedral shape. Cleavages occur at two or more sites: release (R-site) and maturation (M-site).

It is found in the host cytoplasm. It localises to the host nucleus. The enzyme catalyses Cleaves -Ala-|-Ser- and -Ala-|-Ala- bonds in the scaffold protein.. In terms of biological role, acts as a scaffold protein by binding major capsid protein in the cytoplasm, inducing the nuclear localization of both proteins. Multimerizes in the nucleus such as major capsid protein forms the icosahedral T=16 capsid. Autocatalytic cleavage releases the assembly protein, and subsequently abolishes interaction with major capsid protein. Cleavages products are evicted from the capsid before or during DNA packaging. Functionally, protease that plays an essential role in virion assembly within the nucleus. Catalyzes the cleavage of the assembly protein after formation of the spherical procapsid. By that cleavage, the capsid matures and gains its icosahedral shape. The cleavage sites seem to include -Ala-Ser-, -Ala-Ala-, as well as Ala-Thr bonds. Assemblin and cleavages products are evicted from the capsid before or during DNA packaging. Plays a major role in capsid assembly. Acts as a scaffold protein by binding major capsid protein. Multimerizes in the nucleus such as major capsid protein forms the icosahedral T=16 capsid. Cleaved by assemblin after capsid completion. The cleavages products are evicted from the capsid before or during DNA packaging. The sequence is that of Capsid scaffolding protein (U53) from Human herpesvirus 7 (strain JI) (HHV-7).